Reading from the N-terminus, the 333-residue chain is Tetraacyldisaccharide 4'-kinase (333 aa).

55-62 is an ATP binding site; the sequence is TIGGNGKT.

Belongs to the LpxK family.

It carries out the reaction a lipid A disaccharide + ATP = a lipid IVA + ADP + H(+). It participates in glycolipid biosynthesis; lipid IV(A) biosynthesis; lipid IV(A) from (3R)-3-hydroxytetradecanoyl-[acyl-carrier-protein] and UDP-N-acetyl-alpha-D-glucosamine: step 6/6. Its function is as follows. Transfers the gamma-phosphate of ATP to the 4'-position of a tetraacyldisaccharide 1-phosphate intermediate (termed DS-1-P) to form tetraacyldisaccharide 1,4'-bis-phosphate (lipid IVA). The polypeptide is Tetraacyldisaccharide 4'-kinase (Blochmanniella floridana).